Reading from the N-terminus, the 320-residue chain is Glutaconate CoA-transferase subunit A (320 aa).

The protein belongs to the 3-oxoacid CoA-transferase subunit A family. In terms of assembly, heterooctamer of four A and four B subunits.

It is found in the cytoplasm. The enzyme catalyses trans-glutaconate + acetyl-CoA = (2E)-glutaconyl-CoA + acetate. The protein operates within amino-acid degradation; L-glutamate degradation via hydroxyglutarate pathway; crotonoyl-CoA from L-glutamate: step 3/5. Functionally, catalyzes the transfer of the CoA moiety from acetyl-CoA to (R)-2-hydroxyglutarate and related compounds like glutaconate. The chain is Glutaconate CoA-transferase subunit A (gctA) from Acidaminococcus fermentans (strain ATCC 25085 / DSM 20731 / CCUG 9996 / CIP 106432 / VR4).